A 455-amino-acid chain; its full sequence is Kynurenine 3-monooxygenase (455 aa).

The protein belongs to the aromatic-ring hydroxylase family. KMO subfamily. FAD serves as cofactor.

The catalysed reaction is L-kynurenine + NADPH + O2 + H(+) = 3-hydroxy-L-kynurenine + NADP(+) + H2O. The protein operates within cofactor biosynthesis; NAD(+) biosynthesis; quinolinate from L-kynurenine: step 1/3. Functionally, catalyzes the hydroxylation of L-kynurenine (L-Kyn) to form 3-hydroxy-L-kynurenine (L-3OHKyn). Required for synthesis of quinolinic acid. This is Kynurenine 3-monooxygenase from Xanthomonas oryzae pv. oryzae (strain PXO99A).